The primary structure comprises 30 residues: Snaclec carinactivase-1 regulatory subunit 17 kDa chain (30 aa).

The C-type lectin domain occupies 1 to 30 (DCLPGWSSHEGHCYKVFNQEMYWADAEKFC). Cysteine 2 and cysteine 13 are joined by a disulfide.

Belongs to the snaclec family. In terms of assembly, heterodimer of a metalloproteinase subunit and a regulatory subunit comprising two polypeptides disulfide-linked (14 kDa and 17 kDa chains). As to expression, expressed by the venom gland.

The protein localises to the secreted. Functionally, calcium-dependent prothrombin activator. This protein may activate prothrombin via recognition by the regulatory subunit of the calcium ion bound conformation of its gamma-carboxyglutamic acid (GLA) domain, and the subsequent conversion of prothrombin to active thrombin is catalyzed by the catalytic subunit. The chain is Snaclec carinactivase-1 regulatory subunit 17 kDa chain from Echis carinatus (Saw-scaled viper).